A 442-amino-acid chain; its full sequence is Protein translocase subunit SecF (442 aa).

Residues methionine 1 to alanine 39 form a disordered region. 6 consecutive transmembrane segments (helical) span residues tryptophan 67–phenylalanine 87, isoleucine 187–threonine 207, alanine 218–phenylalanine 238, alanine 243–phenylalanine 263, leucine 301–glycine 321, and leucine 331–threonine 351. The tract at residues valine 366–arginine 442 is disordered. Over residues glutamine 402 to arginine 432 the composition is skewed to low complexity. Basic residues predominate over residues proline 433–arginine 442.

It belongs to the SecD/SecF family. SecF subfamily. In terms of assembly, forms a complex with SecD. Part of the essential Sec protein translocation apparatus which comprises SecA, SecYEG and auxiliary proteins SecDF. Other proteins may also be involved.

It is found in the cell membrane. In terms of biological role, part of the Sec protein translocase complex. Interacts with the SecYEG preprotein conducting channel. SecDF uses the proton motive force (PMF) to complete protein translocation after the ATP-dependent function of SecA. The polypeptide is Protein translocase subunit SecF (Mycobacterium tuberculosis (strain ATCC 25618 / H37Rv)).